Here is a 338-residue protein sequence, read N- to C-terminus: Phenylalanine--tRNA ligase alpha subunit (338 aa).

Residue E252 participates in Mg(2+) binding.

Belongs to the class-II aminoacyl-tRNA synthetase family. Phe-tRNA synthetase alpha subunit type 1 subfamily. In terms of assembly, tetramer of two alpha and two beta subunits. Mg(2+) is required as a cofactor.

Its subcellular location is the cytoplasm. The catalysed reaction is tRNA(Phe) + L-phenylalanine + ATP = L-phenylalanyl-tRNA(Phe) + AMP + diphosphate + H(+). In Pseudomonas paraeruginosa (strain DSM 24068 / PA7) (Pseudomonas aeruginosa (strain PA7)), this protein is Phenylalanine--tRNA ligase alpha subunit.